The chain runs to 777 residues: Translation initiation factor IF-2 (777 aa).

2 disordered regions span residues 30-54 (SPSM…QDEN) and 98-117 (EDSN…SFKE). Over residues 98–109 (EDSNEKTNDRDS) the composition is skewed to basic and acidic residues. Residues 279–449 (PKPPIVTFMG…LLIAELMKLE (171 aa)) form the tr-type G domain. Residues 288-295 (GHVDHGKT) are G1. 288-295 (GHVDHGKT) is a GTP binding site. The interval 313 to 317 (GITQH) is G2. Residues 334-337 (DTPG) form a G3 region. GTP contacts are provided by residues 334 to 338 (DTPGH) and 388 to 391 (NKID). Residues 388–391 (NKID) form a G4 region. The tract at residues 425-427 (SAK) is G5.

Belongs to the TRAFAC class translation factor GTPase superfamily. Classic translation factor GTPase family. IF-2 subfamily.

Its subcellular location is the cytoplasm. One of the essential components for the initiation of protein synthesis. Protects formylmethionyl-tRNA from spontaneous hydrolysis and promotes its binding to the 30S ribosomal subunits. Also involved in the hydrolysis of GTP during the formation of the 70S ribosomal complex. The chain is Translation initiation factor IF-2 from Wolbachia sp. subsp. Brugia malayi (strain TRS).